A 1382-amino-acid chain; its full sequence is DNA-directed RNA polymerase subunit beta' (1382 aa).

Positions 70, 72, 85, and 88 each coordinate Zn(2+). Residues aspartate 460, aspartate 462, and aspartate 464 each coordinate Mg(2+). The Zn(2+) site is built by cysteine 808, cysteine 882, cysteine 889, and cysteine 892.

Belongs to the RNA polymerase beta' chain family. As to quaternary structure, the RNAP catalytic core consists of 2 alpha, 1 beta, 1 beta' and 1 omega subunit. When a sigma factor is associated with the core the holoenzyme is formed, which can initiate transcription. Mg(2+) is required as a cofactor. The cofactor is Zn(2+).

The catalysed reaction is RNA(n) + a ribonucleoside 5'-triphosphate = RNA(n+1) + diphosphate. DNA-dependent RNA polymerase catalyzes the transcription of DNA into RNA using the four ribonucleoside triphosphates as substrates. The polypeptide is DNA-directed RNA polymerase subunit beta' (Geobacter sp. (strain M21)).